The following is a 427-amino-acid chain: tRNA(Ile)-lysidine synthase (427 aa).

25 to 30 is an ATP binding site; it reads SGGLDS.

Belongs to the tRNA(Ile)-lysidine synthase family.

The protein localises to the cytoplasm. The enzyme catalyses cytidine(34) in tRNA(Ile2) + L-lysine + ATP = lysidine(34) in tRNA(Ile2) + AMP + diphosphate + H(+). Functionally, ligates lysine onto the cytidine present at position 34 of the AUA codon-specific tRNA(Ile) that contains the anticodon CAU, in an ATP-dependent manner. Cytidine is converted to lysidine, thus changing the amino acid specificity of the tRNA from methionine to isoleucine. The protein is tRNA(Ile)-lysidine synthase of Histophilus somni (strain 129Pt) (Haemophilus somnus).